The chain runs to 324 residues: Porphobilinogen deaminase 1 (324 aa).

At Cys-249 the chain carries S-(dipyrrolylmethanemethyl)cysteine.

This sequence belongs to the HMBS family. As to quaternary structure, monomer. The cofactor is dipyrromethane.

It catalyses the reaction 4 porphobilinogen + H2O = hydroxymethylbilane + 4 NH4(+). It participates in porphyrin-containing compound metabolism; protoporphyrin-IX biosynthesis; coproporphyrinogen-III from 5-aminolevulinate: step 2/4. Functionally, tetrapolymerization of the monopyrrole PBG into the hydroxymethylbilane pre-uroporphyrinogen in several discrete steps. This is Porphobilinogen deaminase 1 (hemC1) from Streptomyces avermitilis (strain ATCC 31267 / DSM 46492 / JCM 5070 / NBRC 14893 / NCIMB 12804 / NRRL 8165 / MA-4680).